The sequence spans 940 residues: Isoleucine--tRNA ligase (940 aa).

Positions 58 to 68 (PYANGSIHIGH) match the 'HIGH' region motif. Glu564 provides a ligand contact to L-isoleucyl-5'-AMP. Positions 605–609 (KMSKS) match the 'KMSKS' region motif. Lys608 is an ATP binding site. Zn(2+) is bound by residues Cys903, Cys906, Cys923, and Cys926.

This sequence belongs to the class-I aminoacyl-tRNA synthetase family. IleS type 1 subfamily. In terms of assembly, monomer. The cofactor is Zn(2+).

Its subcellular location is the cytoplasm. The catalysed reaction is tRNA(Ile) + L-isoleucine + ATP = L-isoleucyl-tRNA(Ile) + AMP + diphosphate. Catalyzes the attachment of isoleucine to tRNA(Ile). As IleRS can inadvertently accommodate and process structurally similar amino acids such as valine, to avoid such errors it has two additional distinct tRNA(Ile)-dependent editing activities. One activity is designated as 'pretransfer' editing and involves the hydrolysis of activated Val-AMP. The other activity is designated 'posttransfer' editing and involves deacylation of mischarged Val-tRNA(Ile). In Shewanella sp. (strain ANA-3), this protein is Isoleucine--tRNA ligase.